The following is a 130-amino-acid chain: Fluoride-specific ion channel FluC (130 aa).

Transmembrane regions (helical) follow at residues 3–23, 38–58, 67–87, and 102–122; these read LVFL…YFVG, LGTF…GHLA, FGIF…SYGL, and ISYV…GWFL. Na(+) contacts are provided by Gly-77 and Thr-80.

It belongs to the fluoride channel Fluc/FEX (TC 1.A.43) family.

The protein localises to the cell inner membrane. The catalysed reaction is fluoride(in) = fluoride(out). Its activity is regulated as follows. Na(+) is not transported, but it plays an essential structural role and its presence is essential for fluoride channel function. Its function is as follows. Fluoride-specific ion channel. Important for reducing fluoride concentration in the cell, thus reducing its toxicity. This chain is Fluoride-specific ion channel FluC, found in Helicobacter pylori (strain J99 / ATCC 700824) (Campylobacter pylori J99).